Consider the following 205-residue polypeptide: Ribosome maturation factor RimP (205 aa).

It belongs to the RimP family.

Its subcellular location is the cytoplasm. Its function is as follows. Required for maturation of 30S ribosomal subunits. This is Ribosome maturation factor RimP from Sinorhizobium medicae (strain WSM419) (Ensifer medicae).